A 185-amino-acid chain; its full sequence is Shikimate kinase (185 aa).

ATP is bound at residue 21–26; it reads GVGKTT. Position 25 (Thr25) interacts with Mg(2+). Substrate contacts are provided by Asp43, Arg67, and Gly90. Arg129 serves as a coordination point for ATP. Arg147 is a binding site for substrate.

This sequence belongs to the shikimate kinase family. As to quaternary structure, monomer. Mg(2+) serves as cofactor.

The protein resides in the cytoplasm. It carries out the reaction shikimate + ATP = 3-phosphoshikimate + ADP + H(+). It participates in metabolic intermediate biosynthesis; chorismate biosynthesis; chorismate from D-erythrose 4-phosphate and phosphoenolpyruvate: step 5/7. Its function is as follows. Catalyzes the specific phosphorylation of the 3-hydroxyl group of shikimic acid using ATP as a cosubstrate. This chain is Shikimate kinase, found in Bacillus pumilus (strain SAFR-032).